The sequence spans 429 residues: Adenylosuccinate synthetase (429 aa).

Residues 12–18 and 40–42 contribute to the GTP site; these read GDEGKGK and GHT. The active-site Proton acceptor is the aspartate 13. Mg(2+) is bound by residues aspartate 13 and glycine 40. Residues 13-16, 38-41, threonine 129, arginine 143, glutamine 224, threonine 239, and arginine 303 contribute to the IMP site; these read DEGK and NAGH. The active-site Proton donor is the histidine 41. Position 299–305 (299–305) interacts with substrate; sequence VTTGRAR. Residues arginine 305, 331–333, and 413–415 contribute to the GTP site; these read KLD and GVG.

Belongs to the adenylosuccinate synthetase family. In terms of assembly, homodimer. It depends on Mg(2+) as a cofactor.

It localises to the cytoplasm. It catalyses the reaction IMP + L-aspartate + GTP = N(6)-(1,2-dicarboxyethyl)-AMP + GDP + phosphate + 2 H(+). Its pathway is purine metabolism; AMP biosynthesis via de novo pathway; AMP from IMP: step 1/2. Its function is as follows. Plays an important role in the de novo pathway of purine nucleotide biosynthesis. Catalyzes the first committed step in the biosynthesis of AMP from IMP. The sequence is that of Adenylosuccinate synthetase from Rhodococcus erythropolis (strain PR4 / NBRC 100887).